A 328-amino-acid polypeptide reads, in one-letter code: Malate dehydrogenase (328 aa).

12-18 (GAAGQIG) provides a ligand contact to NAD(+). Substrate is bound by residues Arg-93 and Arg-99. NAD(+)-binding positions include Asn-106, Gln-113, and 130 to 132 (TGN). Residues Asn-132 and Arg-163 each coordinate substrate. His-188 acts as the Proton acceptor in catalysis.

The protein belongs to the LDH/MDH superfamily. MDH type 2 family.

The catalysed reaction is (S)-malate + NAD(+) = oxaloacetate + NADH + H(+). Its function is as follows. Catalyzes the reversible oxidation of malate to oxaloacetate. In Kocuria rhizophila (strain ATCC 9341 / DSM 348 / NBRC 103217 / DC2201), this protein is Malate dehydrogenase.